The sequence spans 87 residues: uncharacterized protein (87 aa).

Positions Lys52–Ala87 are disordered. The span at Ser71 to Ala87 shows a compositional bias: acidic residues.

This is an uncharacterized protein from Autographa californica nuclear polyhedrosis virus (AcMNPV).